We begin with the raw amino-acid sequence, 382 residues long: Mitogen-activated protein kinase 9 (382 aa).

The Protein kinase domain occupies 26–321 (YQQLKPIGSG…VDEALRHPYI (296 aa)). ATP is bound by residues 33–38 (GSGAQG) and lysine 55. Aspartate 151 (proton acceptor) is an active-site residue. Residue threonine 183 is modified to Phosphothreonine. A TXY motif is present at residues 183 to 185 (TPY). At tyrosine 185 the chain carries Phosphotyrosine.

The protein belongs to the protein kinase superfamily. CMGC Ser/Thr protein kinase family. MAP kinase subfamily. Requires Mg(2+) as cofactor. In terms of processing, dually phosphorylated on Thr-183 and Tyr-185, which activates the enzyme. Expressed in the neuroepithelium of developing brain at stages 16 to 26.

The enzyme catalyses L-seryl-[protein] + ATP = O-phospho-L-seryl-[protein] + ADP + H(+). The catalysed reaction is L-threonyl-[protein] + ATP = O-phospho-L-threonyl-[protein] + ADP + H(+). With respect to regulation, activated by threonine and tyrosine phosphorylation. Responds to activation by environmental stress and pro-inflammatory cytokines by phosphorylating a number of transcription factors, primarily components of AP-1 such as JUN and ATF2 and thus regulates AP-1 transcriptional activity. May play a role in the development of the central nervous system during embryogenesis. May play a role in the regulation of the circadian clock. In Gallus gallus (Chicken), this protein is Mitogen-activated protein kinase 9 (MAPK9).